The following is a 179-amino-acid chain: uncharacterized protein (179 aa).

The stretch at Ile139–Glu172 forms a coiled coil.

This is an uncharacterized protein from Methanocaldococcus jannaschii (strain ATCC 43067 / DSM 2661 / JAL-1 / JCM 10045 / NBRC 100440) (Methanococcus jannaschii).